The primary structure comprises 357 residues: uncharacterized protein (357 aa).

The HEAT repeat unit spans residues 173–211; sequence VLPILEKLMQDESLYVRKSVANNLNDISKTHPHLLRKVA.

This is an uncharacterized protein from Bacillus subtilis (strain 168).